Consider the following 475-residue polypeptide: Ribulose bisphosphate carboxylase large chain (475 aa).

Positions Met1–Ser2 are excised as a propeptide. At Pro3 the chain carries N-acetylproline. Lys14 is subject to N6,N6,N6-trimethyllysine. Substrate is bound by residues Asn123 and Thr173. Lys175 acts as the Proton acceptor in catalysis. Lys177 lines the substrate pocket. Residues Lys201, Asp203, and Glu204 each coordinate Mg(2+). At Lys201 the chain carries N6-carboxylysine. His294 acts as the Proton acceptor in catalysis. Arg295, His327, and Ser379 together coordinate substrate.

The protein belongs to the RuBisCO large chain family. Type I subfamily. In terms of assembly, heterohexadecamer of 8 large chains and 8 small chains; disulfide-linked. The disulfide link is formed within the large subunit homodimers. It depends on Mg(2+) as a cofactor. Post-translationally, the disulfide bond which can form in the large chain dimeric partners within the hexadecamer appears to be associated with oxidative stress and protein turnover.

Its subcellular location is the plastid. It localises to the chloroplast. The catalysed reaction is 2 (2R)-3-phosphoglycerate + 2 H(+) = D-ribulose 1,5-bisphosphate + CO2 + H2O. The enzyme catalyses D-ribulose 1,5-bisphosphate + O2 = 2-phosphoglycolate + (2R)-3-phosphoglycerate + 2 H(+). Functionally, ruBisCO catalyzes two reactions: the carboxylation of D-ribulose 1,5-bisphosphate, the primary event in carbon dioxide fixation, as well as the oxidative fragmentation of the pentose substrate in the photorespiration process. Both reactions occur simultaneously and in competition at the same active site. The polypeptide is Ribulose bisphosphate carboxylase large chain (Cycas taitungensis (Prince sago)).